Here is a 556-residue protein sequence, read N- to C-terminus: Arginine--tRNA ligase (556 aa).

A 'HIGH' region motif is present at residues A129 to H139.

This sequence belongs to the class-I aminoacyl-tRNA synthetase family. In terms of assembly, monomer.

It is found in the cytoplasm. The catalysed reaction is tRNA(Arg) + L-arginine + ATP = L-arginyl-tRNA(Arg) + AMP + diphosphate. The sequence is that of Arginine--tRNA ligase from Desulfosudis oleivorans (strain DSM 6200 / JCM 39069 / Hxd3) (Desulfococcus oleovorans).